The primary structure comprises 296 residues: Partitioning protein REP2 (296 aa).

Residue methionine 1 is modified to N-acetylmethionine. Residues 1–57 (MDDIETAKNLTVKARTAYSVWDVCRLFIEMIAPDVDIDIESKRKSDELLFPGYVIRP) are interaction with REP1. The interval 58–296 (MESLTTGRPY…GRKSRNTSRV (239 aa)) is DNA-binding, and self-association. Positions 228-296 (SELEGRTEVN…GRKSRNTSRV (69 aa)) are disordered. Basic residues predominate over residues 275-296 (PTKKRRVATRVRGRKSRNTSRV). The interval 276 to 296 (TKKRRVATRVRGRKSRNTSRV) is nuclear localization.

In terms of assembly, interacts with REP1.

The protein localises to the nucleus. Functionally, part of the plasmid partitioning system, which ensures the equal distribution of replicated plasmid molecules to daughter cells. The plasmids exist as well-organized plasmid foci within the nucleus that stay together throughout the cell-cycle and act as entity during segregation, effetively reducing copy number to one. Plasmid partitioning requires the proteins REP1, REP2, and a cis-acting locus STB (REP3). REP1-REP2 stably associate with CSE4-containing chromatin at STB during S-phase, marking the locus with a centromeric tag, and thereby probably catching mitotic spindle microtubules to the plasmid cluster and coupling plasmid segregation to chromosome segregation. REP1-REP2 are required to recruit the cohesin complex to the STB locus for pairing of the replicated plasmid cluster, a prerequisite for successful plasmid segregation. REP1-REP2 also negatively regulate expression of site-specific recombinase FLP and of RAF1. The sequence is that of Partitioning protein REP2 (REP2) from Saccharomyces cerevisiae (strain ATCC 204508 / S288c) (Baker's yeast).